A 234-amino-acid polypeptide reads, in one-letter code: Large ribosomal subunit protein uL1 (234 aa).

It belongs to the universal ribosomal protein uL1 family. Part of the 50S ribosomal subunit.

Functionally, binds directly to 23S rRNA. The L1 stalk is quite mobile in the ribosome, and is involved in E site tRNA release. Protein L1 is also a translational repressor protein, it controls the translation of the L11 operon by binding to its mRNA. This chain is Large ribosomal subunit protein uL1, found in Helicobacter acinonychis (strain Sheeba).